A 655-amino-acid polypeptide reads, in one-letter code: Alpha-amylase (655 aa).

Glutamate 123 acts as the Nucleophile in catalysis. Aspartate 214 acts as the Proton donor in catalysis.

The protein belongs to the glycosyl hydrolase 57 family.

The catalysed reaction is Endohydrolysis of (1-&gt;4)-alpha-D-glucosidic linkages in polysaccharides containing three or more (1-&gt;4)-alpha-linked D-glucose units.. This is Alpha-amylase (amyA) from Pyrococcus abyssi (strain GE5 / Orsay).